A 356-amino-acid polypeptide reads, in one-letter code: Protein-arginine kinase (356 aa).

Positions 24–254 (IVLSSRIRLA…MQLIQQERAA (231 aa)) constitute a Phosphagen kinase C-terminal domain. Residues 27-31 (SSRIR), His-91, Arg-125, 176-180 (RASVM), and 207-212 (RGIYGE) contribute to the ATP site. Residues 337–342 (RDERRA) carry the RDXXRA motif of the pArg binding pocket involved in allosteric regulation motif.

The protein belongs to the ATP:guanido phosphotransferase family.

It carries out the reaction L-arginyl-[protein] + ATP = N(omega)-phospho-L-arginyl-[protein] + ADP + H(+). Appears to be allosterically activated by the binding of pArg-containing polypeptides to the pArg-binding pocket localized in the C-terminal domain of McsB. Its function is as follows. Catalyzes the specific phosphorylation of arginine residues in a large number of proteins. Is part of the bacterial stress response system. Protein arginine phosphorylation has a physiologically important role and is involved in the regulation of many critical cellular processes, such as protein homeostasis, motility, competence, and stringent and stress responses, by regulating gene expression and protein activity. This Halalkalibacterium halodurans (strain ATCC BAA-125 / DSM 18197 / FERM 7344 / JCM 9153 / C-125) (Bacillus halodurans) protein is Protein-arginine kinase.